We begin with the raw amino-acid sequence, 163 residues long: Probable ribosome biogenesis protein RLP24 (163 aa).

This sequence belongs to the eukaryotic ribosomal protein eL24 family. In terms of assembly, associated with nucleolar and cytoplasmic pre-60S particles. At the end of biogenesis it dissociates from cytoplasmic pre-60S particles and is likely to be exchanged for its ribosomal homolog, RPL24.

The protein localises to the nucleus. It is found in the nucleolus. In terms of biological role, involved in the biogenesis of the 60S ribosomal subunit. Ensures the docking of GTPBP4/NOG1 to pre-60S particles. The polypeptide is Probable ribosome biogenesis protein RLP24 (Rsl24d1) (Rattus norvegicus (Rat)).